The following is a 172-amino-acid chain: Adenine phosphoribosyltransferase (172 aa).

This sequence belongs to the purine/pyrimidine phosphoribosyltransferase family. As to quaternary structure, homodimer.

Its subcellular location is the cytoplasm. It catalyses the reaction AMP + diphosphate = 5-phospho-alpha-D-ribose 1-diphosphate + adenine. It functions in the pathway purine metabolism; AMP biosynthesis via salvage pathway; AMP from adenine: step 1/1. Catalyzes a salvage reaction resulting in the formation of AMP, that is energically less costly than de novo synthesis. This chain is Adenine phosphoribosyltransferase, found in Synechococcus sp. (strain CC9311).